Here is a 300-residue protein sequence, read N- to C-terminus: 17-beta-hydroxysteroid dehydrogenase 13 (300 aa).

Residues 1–19 (MNIILEILLLLITIIYSYL) form the signal peptide. S33 carries the phosphoserine modification. Residue 40–67 (LITGAGHGIGRQTTYEFAKRQSILVLWD) coordinates NAD(+). S172 contributes to the substrate binding site. Residue Y185 is the Proton acceptor of the active site. Residue K189 coordinates NAD(+).

It belongs to the short-chain dehydrogenases/reductases (SDR) family. As to expression, highly expressed in the liver. Also detected in ovary, bone marrow, kidney, brain, lung, skeletal muscle, bladder and testis.

The protein localises to the lipid droplet. It localises to the endoplasmic reticulum. The protein resides in the cytoplasm. It carries out the reaction 17beta-estradiol + NAD(+) = estrone + NADH + H(+). It catalyses the reaction all-trans-retinol + NAD(+) = all-trans-retinal + NADH + H(+). The enzyme catalyses all-trans-retinal + NAD(+) + H2O = all-trans-retinoate + NADH + 2 H(+). Plays a pivotal role in hepatic lipid metabolism. In vitro, it catalyzes the oxidation of a variety of lipid substrates, including 17beta-estradiol, retinol, retinal, and leukotriene B4. Functionally, has retinol/retinal dehydrogenase activity in vitro. In terms of biological role, does not have retinol/retinal dehydrogenase activity in vitro. In Homo sapiens (Human), this protein is 17-beta-hydroxysteroid dehydrogenase 13.